The following is a 96-amino-acid chain: ASNSD1 upstream open reading frame protein (96 aa).

The segment covering 1 to 10 has biased composition (basic and acidic residues); that stretch reads MPSRGTRPED. Residues 1–28 are disordered; sequence MPSRGTRPEDSSVLIPTDNSTPHKEDLS. A coiled-coil region spans residues 23 to 96; that stretch reads HKEDLSSKIK…ENLDKTKIKK (74 aa).

As to quaternary structure, component of the PAQosome complex which is responsible for the biogenesis of several protein complexes and which consists of R2TP complex members RUVBL1, RUVBL2, RPAP3 and PIH1D1, URI complex members PFDN2, PFDN6, PDRG1, UXT and URI1 as well as ASDURF, POLR2E and DNAAF10/WDR92.

Its subcellular location is the cytoplasm. This is ASNSD1 upstream open reading frame protein from Homo sapiens (Human).